Reading from the N-terminus, the 456-residue chain is Methylthioribose-1-phosphate isomerase (456 aa).

The tract at residues 40–113 is thioesterase; that stretch reads KGLVHGGFIF…CFKGEDKVFE (74 aa). An MTR-1-P isomerase region spans residues 124–456; that stretch reads MFWRGEKMEV…PERITEALKD (333 aa). Residues 176–178, Arg211, and Gln309 contribute to the substrate site; that span reads RGA. Asp350 (proton donor) is an active-site residue. 360–361 serves as a coordination point for substrate; it reads NK.

It belongs to the eIF-2B alpha/beta/delta subunits family. MtnA subfamily.

It catalyses the reaction 5-(methylsulfanyl)-alpha-D-ribose 1-phosphate = 5-(methylsulfanyl)-D-ribulose 1-phosphate. It functions in the pathway amino-acid biosynthesis; L-methionine biosynthesis via salvage pathway; L-methionine from S-methyl-5-thio-alpha-D-ribose 1-phosphate: step 1/6. Catalyzes the interconversion of methylthioribose-1-phosphate (MTR-1-P) into methylthioribulose-1-phosphate (MTRu-1-P). The protein is Methylthioribose-1-phosphate isomerase (mtnA) of Aquifex aeolicus (strain VF5).